Reading from the N-terminus, the 209-residue chain is Octanoyltransferase (209 aa).

The region spanning 30 to 209 is the BPL/LPL catalytic domain; the sequence is DHEPEIIYLV…IQTEFNKIFK (180 aa). Residues 69–76, 143–145, and 156–158 each bind substrate; these read RGGKFTFH, AIG, and GVA. C174 acts as the Acyl-thioester intermediate in catalysis.

The protein belongs to the LipB family.

The protein localises to the cytoplasm. The enzyme catalyses octanoyl-[ACP] + L-lysyl-[protein] = N(6)-octanoyl-L-lysyl-[protein] + holo-[ACP] + H(+). The protein operates within protein modification; protein lipoylation via endogenous pathway; protein N(6)-(lipoyl)lysine from octanoyl-[acyl-carrier-protein]: step 1/2. Functionally, catalyzes the transfer of endogenously produced octanoic acid from octanoyl-acyl-carrier-protein onto the lipoyl domains of lipoate-dependent enzymes. Lipoyl-ACP can also act as a substrate although octanoyl-ACP is likely to be the physiological substrate. The protein is Octanoyltransferase of Rickettsia rickettsii (strain Iowa).